Here is a 412-residue protein sequence, read N- to C-terminus: NADH-quinone oxidoreductase subunit D (412 aa).

This sequence belongs to the complex I 49 kDa subunit family. As to quaternary structure, NDH-1 is composed of 14 different subunits. Subunits NuoB, C, D, E, F, and G constitute the peripheral sector of the complex.

It localises to the cell inner membrane. It carries out the reaction a quinone + NADH + 5 H(+)(in) = a quinol + NAD(+) + 4 H(+)(out). NDH-1 shuttles electrons from NADH, via FMN and iron-sulfur (Fe-S) centers, to quinones in the respiratory chain. The immediate electron acceptor for the enzyme in this species is believed to be a menaquinone. Couples the redox reaction to proton translocation (for every two electrons transferred, four hydrogen ions are translocated across the cytoplasmic membrane), and thus conserves the redox energy in a proton gradient. The chain is NADH-quinone oxidoreductase subunit D from Flavobacterium johnsoniae (strain ATCC 17061 / DSM 2064 / JCM 8514 / BCRC 14874 / CCUG 350202 / NBRC 14942 / NCIMB 11054 / UW101) (Cytophaga johnsonae).